The sequence spans 84 residues: Putative regulatory protein Hore_09800 (84 aa).

It belongs to the RemA family.

In Halothermothrix orenii (strain H 168 / OCM 544 / DSM 9562), this protein is Putative regulatory protein Hore_09800.